We begin with the raw amino-acid sequence, 816 residues long: Probable E3 ubiquitin-protein ligase hulA (816 aa).

The region spanning 1–112 (MGSNLPAQPN…QMGGDEMLTR (112 aa)) is the C2 domain. Disordered regions lie at residues 134–238 (NLST…WERR) and 253–353 (RTTT…YFVD). Polar residues-rich tracts occupy residues 151–168 (MQPSTSSGLVPQVSASTP), 177–202 (ADPTASNPSLHPQRVPSTTRPSSTIV), 217–226 (SRTNLSSFED), and 253–270 (RTTTWTRPSNNYNEQTSR). Residues 229–262 (GRLPAGWERREDNLGRTYYVDHNTRTTTWTRPSN) form the WW 1 domain. The span at 279-294 (LERRAHQSRMLPEDRT) shows a compositional bias: basic and acidic residues. The segment covering 295 to 309 (GASSPNLQENQQQAQ) has biased composition (polar residues). The span at 310 to 333 (TPPAGGSASAVSMMATGATTAGTG) shows a compositional bias: low complexity. WW domains lie at 333 to 366 (GELPPGWEQRTTPEGRPYFVDHNTRTTTWVDPRR) and 393 to 426 (GPLPSGWEMRLTNTARVYFVDHNTKTTTWDDPRL). In terms of domain architecture, HECT spans 482–816 (SASDLKKRLM…VEETLGFGQE (335 aa)). Cysteine 784 acts as the Glycyl thioester intermediate in catalysis.

It belongs to the RSP5/NEDD4 family. In terms of assembly, interacts with creD.

It localises to the cytoplasm. The catalysed reaction is S-ubiquitinyl-[E2 ubiquitin-conjugating enzyme]-L-cysteine + [acceptor protein]-L-lysine = [E2 ubiquitin-conjugating enzyme]-L-cysteine + N(6)-ubiquitinyl-[acceptor protein]-L-lysine.. It functions in the pathway protein modification; protein ubiquitination. Functionally, E3 ubiquitin-protein ligase which accepts ubiquitin from an E2 ubiquitin-conjugating enzyme in the form of a thioester and then directly transfers the ubiquitin to targeted substrates. Probably involved in the regulatory network controlling carbon source utilization. The chain is Probable E3 ubiquitin-protein ligase hulA (hulA) from Aspergillus oryzae (strain ATCC 42149 / RIB 40) (Yellow koji mold).